The following is a 125-amino-acid chain: Small ribosomal subunit protein uS12 (125 aa).

Positions 9-28 (RSERSKLKKKTKSPALKQCP) are disordered. A 3-methylthioaspartic acid modification is found at aspartate 89. Residues 104–125 (AQGVKDRKQGRSKYGTKRPKKA) form a disordered region. Basic residues predominate over residues 113–125 (GRSKYGTKRPKKA).

The protein belongs to the universal ribosomal protein uS12 family. Part of the 30S ribosomal subunit. Contacts proteins S8 and S17. May interact with IF1 in the 30S initiation complex.

With S4 and S5 plays an important role in translational accuracy. Its function is as follows. Interacts with and stabilizes bases of the 16S rRNA that are involved in tRNA selection in the A site and with the mRNA backbone. Located at the interface of the 30S and 50S subunits, it traverses the body of the 30S subunit contacting proteins on the other side and probably holding the rRNA structure together. The combined cluster of proteins S8, S12 and S17 appears to hold together the shoulder and platform of the 30S subunit. The sequence is that of Small ribosomal subunit protein uS12 from Rippkaea orientalis (strain PCC 8801 / RF-1) (Cyanothece sp. (strain PCC 8801)).